The sequence spans 512 residues: Bifunctional pantoate ligase/cytidylate kinase (512 aa).

A pantoate--beta-alanine ligase region spans residues 1 to 276; the sequence is MKLQTSADLQ…CGEARLIDHR (276 aa). 27–34 serves as a coordination point for ATP; the sequence is MGALHQGH. The active-site Proton donor is the histidine 34. Position 58 (glutamine 58) interacts with (R)-pantoate. A beta-alanine-binding site is contributed by glutamine 58. 147-150 is an ATP binding site; the sequence is GEKD. Glutamine 153 is a (R)-pantoate binding site. Residues leucine 176 and 184–187 contribute to the ATP site; that span reads LSSR. The segment at 277–512 is cytidylate kinase; the sequence is VLMSRLPILA…VPVEALNADA (236 aa).

It in the N-terminal section; belongs to the pantothenate synthetase family. In the C-terminal section; belongs to the cytidylate kinase family. Type 1 subfamily.

The protein resides in the cytoplasm. It carries out the reaction (R)-pantoate + beta-alanine + ATP = (R)-pantothenate + AMP + diphosphate + H(+). The catalysed reaction is CMP + ATP = CDP + ADP. It catalyses the reaction dCMP + ATP = dCDP + ADP. The protein operates within cofactor biosynthesis; (R)-pantothenate biosynthesis; (R)-pantothenate from (R)-pantoate and beta-alanine: step 1/1. Functionally, catalyzes the condensation of pantoate with beta-alanine in an ATP-dependent reaction via a pantoyl-adenylate intermediate. In terms of biological role, catalyzes the transfer of a phosphate group from ATP to either CMP or dCMP to form CDP or dCDP and ADP, respectively. The chain is Bifunctional pantoate ligase/cytidylate kinase from Synechococcus sp. (strain RCC307).